The sequence spans 264 residues: Small ribosomal subunit protein uS2 (264 aa).

Residues 243–253 (IEAAEDGEEVD) are compositionally biased toward acidic residues. The segment at 243–264 (IEAAEDGEEVDNAQLTSSQGRS) is disordered. Over residues 255-264 (AQLTSSQGRS) the composition is skewed to polar residues.

This sequence belongs to the universal ribosomal protein uS2 family.

The protein is Small ribosomal subunit protein uS2 of Deinococcus geothermalis (strain DSM 11300 / CIP 105573 / AG-3a).